The chain runs to 217 residues: Putative 8-oxo-dGTP diphosphatase 3 (217 aa).

Residues 30–164 form the Nudix hydrolase domain; that stretch reads GRYGAAGLLL…PGFAASWQRL (135 aa). A disordered region spans residues 67 to 92; the sequence is LPGGARDSHETPEQTAVRESSEEAGL. 4 residues coordinate Mg(2+): glycine 70, glutamate 85, glutamate 88, and glutamate 89. Residues 70 to 91 carry the Nudix box motif; that stretch reads GARDSHETPEQTAVRESSEEAG.

The protein belongs to the Nudix hydrolase family. Mg(2+) serves as cofactor. Mn(2+) is required as a cofactor.

The enzyme catalyses 8-oxo-dGTP + H2O = 8-oxo-dGMP + diphosphate + H(+). May be involved in the GO system responsible for removing an oxidatively damaged form of guanine (7,8-dihydro-8-oxoguanine, 8-oxo-dGTP) from DNA and the nucleotide pool. 8-oxo-dGTP is inserted opposite dA and dC residues of template DNA with almost equal efficiency thus leading to A.T to G.C transversions. MutT specifically degrades 8-oxo-dGTP to the monophosphate. The polypeptide is Putative 8-oxo-dGTP diphosphatase 3 (mutT3) (Mycobacterium tuberculosis (strain CDC 1551 / Oshkosh)).